Here is a 479-residue protein sequence, read N- to C-terminus: Ribulose bisphosphate carboxylase large chain (479 aa).

The propeptide occupies 1 to 2 (MS). Positions 123 and 173 each coordinate substrate. Lys175 acts as the Proton acceptor in catalysis. Residue Lys177 participates in substrate binding. Positions 201, 203, and 204 each coordinate Mg(2+). Position 201 is an N6-carboxylysine (Lys201). The residue at position 208 (Ser208) is a Phosphoserine. Residue His294 is the Proton acceptor of the active site. The substrate site is built by Arg295 and His327. Residue Thr330 is modified to Phosphothreonine. Substrate is bound at residue Ser379.

Belongs to the RuBisCO large chain family. Type I subfamily. As to quaternary structure, heterohexadecamer of 8 large chains and 8 small chains; disulfide-linked. The disulfide link is formed within the large subunit homodimers. It depends on Mg(2+) as a cofactor. Post-translationally, the disulfide bond which can form in the large chain dimeric partners within the hexadecamer appears to be associated with oxidative stress and protein turnover.

The protein localises to the plastid. It localises to the chloroplast. It catalyses the reaction 2 (2R)-3-phosphoglycerate + 2 H(+) = D-ribulose 1,5-bisphosphate + CO2 + H2O. The catalysed reaction is D-ribulose 1,5-bisphosphate + O2 = 2-phosphoglycolate + (2R)-3-phosphoglycerate + 2 H(+). RuBisCO catalyzes two reactions: the carboxylation of D-ribulose 1,5-bisphosphate, the primary event in carbon dioxide fixation, as well as the oxidative fragmentation of the pentose substrate in the photorespiration process. Both reactions occur simultaneously and in competition at the same active site. This is Ribulose bisphosphate carboxylase large chain from Nasturtium officinale (Watercress).